We begin with the raw amino-acid sequence, 391 residues long: Ammonium transporter Amt1 (391 aa).

Residues 1–7 (MSDGNVA) are Extracellular-facing. Residues 8 to 27 (WILASTALVMLMVPGVGFFY) traverse the membrane as a helical segment. Over 28–38 (AGMVRRKNAVN) the chain is Cytoplasmic. A helical membrane pass occupies residues 39 to 57 (MIALSFISLIITVLLWIFY). The Extracellular segment spans residues 58–89 (GYSVSFGNDISGIIGGLNYALLSGVKGEDLLF). The helical transmembrane segment at 90 to 106 (MMYQMMFAAVTIAILTS) threads the bilayer. Residues 107-113 (AIAERAK) are Cytoplasmic-facing. A helical transmembrane segment spans residues 114–137 (VSSFILLSALWLTFVYAPFAHWLW). Topologically, residues 138-152 (GGGWLAKLGALDFAG) are extracellular. A helical transmembrane segment spans residues 153-170 (GMVVHISSGFAALAVAMT). Over 171 to 188 (IGKRAGFEEYSIEPHSIP) the chain is Cytoplasmic. A helical transmembrane segment spans residues 189–208 (LTLIGAALLWFGWFGFNGGS). Over 209–217 (ALAANDVAI) the chain is Extracellular. The helical transmembrane segment at 218 to 237 (NAVVVTNTSAAVAGFVWMVI) threads the bilayer. At 238-245 (GWIKGKPG) the chain is on the cytoplasmic side. Residues 246-263 (SLGIVSGAIAGLAAITPA) form a helical membrane-spanning segment. Residues 264–268 (AGFVD) lie on the Extracellular side of the membrane. Residues 269 to 287 (VKGAIVIGLVAGIVCYLAM) form a helical membrane-spanning segment. Residues 288-300 (DFRIKKKIDESLD) lie on the Cytoplasmic side of the membrane. Residues 301–319 (AWAIHGIGGLWGSVAVGIL) form a helical membrane-spanning segment. The Extracellular segment spans residues 320 to 337 (ANPEVNGYAGLLFGNPQL). The helical transmembrane segment at 338–363 (LVSQLIAVASTTAYAFLVTLILAKAV) threads the bilayer. Over 364 to 391 (DAAVGLRVSSQEEYVGLDLSQHEEVAYT) the chain is Cytoplasmic.

Belongs to the ammonia transporter channel (TC 1.A.11.2) family. As to quaternary structure, homotrimer.

The protein localises to the cell membrane. Functionally, involved in the uptake of ammonium/ammonia (NH(4)(+)/NH(3)). Transport is electrogenic. Transport the ammonium and methylammonium cation with high specificity. The sequence is that of Ammonium transporter Amt1 from Archaeoglobus fulgidus (strain ATCC 49558 / DSM 4304 / JCM 9628 / NBRC 100126 / VC-16).